The sequence spans 347 residues: Putative [LysW]-L-2-aminoadipate/[LysW]-L-glutamate phosphate reductase (347 aa).

9–12 (SGYI) is an NADP(+) binding site. The active site involves Cys149. An NADP(+)-binding site is contributed by Asn314.

The protein belongs to the NAGSA dehydrogenase family. Type 1 subfamily. LysY sub-subfamily.

The protein localises to the cytoplasm. The catalysed reaction is [amino-group carrier protein]-C-terminal-N-(1-carboxy-5-oxopentan-1-yl)-L-glutamine + phosphate + NADP(+) = [amino-group carrier protein]-C-terminal-N-(1-carboxy-5-phosphooxy-5-oxopentan-1-yl)-L-glutamine + NADPH + H(+). It carries out the reaction [amino-group carrier protein]-C-terminal-gamma-(L-glutamyl-5-semialdehyde)-L-glutamate + phosphate + NADP(+) = [amino-group carrier protein]-C-terminal-gamma-(5-phospho-L-glutamyl)-L-glutamate + NADPH + H(+). Its pathway is amino-acid biosynthesis; L-lysine biosynthesis via AAA pathway; L-lysine from L-alpha-aminoadipate (Thermus route): step 3/5. The protein operates within amino-acid biosynthesis; L-arginine biosynthesis. Its function is as follows. Involved in both the arginine and lysine biosynthetic pathways. The chain is Putative [LysW]-L-2-aminoadipate/[LysW]-L-glutamate phosphate reductase from Picrophilus torridus (strain ATCC 700027 / DSM 9790 / JCM 10055 / NBRC 100828 / KAW 2/3).